Consider the following 495-residue polypeptide: MKTQLLSLGVALTAISQGVIAEDALNWPFKPLVNADDLQNKIKLKDLMAGVQKLQDFAYAHPEKNRVFGGAGHKDTVDWIYNELKATGYYDVKMQPQVHLWSHAEAAVNANGKDLTASAMSYSPPADKITAELVLAKNMGCNATDYPEGTKGKIVLIERGVCSFGEKSAQAGDAKAIGAIVYNNVPGSLAGTLGGLDNRHAPTAGISQADGKNLASLVASGKVTVTMNVISKFENRTTWNVIAETKGGDHNNVIMLGSHSDSVDAGPGINDNGSGTIGIMTVAKALTNFKVNNAVRFGWWTAEEFGLLGSTFYVDSLDDRELHKVKLYLNFDMIGSPNFANQIYDGDGSAYNMTGPAGSAEIEYLFEKFFDDQGIPHQPTAFTGRSDYSAFIKRNVPAGGLFTGAEVVKTAEQAKLFGGEAGVAYDKNYHGKGDTVDNINKGAIYLNTRGIAYATAQYASSLRGFPTRPKTGKRDVSPRGQSMPGGGCGHHSVFM.

A signal peptide spans 1 to 21 (MKTQLLSLGVALTAISQGVIA). Residues 124-218 (PPADKITAEL…ADGKNLASLV (95 aa)) enclose the PA domain. 2 N-linked (GlcNAc...) asparagine glycosylation sites follow: N142 and N235. H259 and D271 together coordinate Zn(2+). N272 carries an N-linked (GlcNAc...) asparagine glycan. Catalysis depends on E303, which acts as the Proton acceptor. Zn(2+) contacts are provided by E304 and D332. Residue N352 is glycosylated (N-linked (GlcNAc...) asparagine). H430 contributes to the Zn(2+) binding site. The interval 464-495 (GFPTRPKTGKRDVSPRGQSMPGGGCGHHSVFM) is disordered.

It belongs to the peptidase M28 family. M28A subfamily. Monomer. Requires Zn(2+) as cofactor.

Its subcellular location is the secreted. In terms of biological role, extracellular aminopeptidase that releases a wide variety of amino acids from natural peptides and contributes to pathogenicity. In Arthroderma otae (strain ATCC MYA-4605 / CBS 113480) (Microsporum canis), this protein is Leucine aminopeptidase 2 (LAP2).